A 543-amino-acid chain; its full sequence is EH domain-containing protein 2 (543 aa).

A phosphoserine mark is found at Ser3 and Ser44. Positions 55-286 (FDGKPMVLVA…DLFRDIQGLP (232 aa)) constitute a Dynamin-type G domain. Positions 65–72 (GQYSTGKT) are G1 motif. Residue 65–72 (GQYSTGKT) coordinates ATP. The tract at residues 91 to 92 (EP) is G2 motif. A G3 motif region spans residues 153 to 156 (DTPG). The segment at 219-222 (NKAD) is G4 motif. An ATP-binding site is contributed by Lys220. A region of interest (G5 motif) is located at residue Val243. Trp258 lines the ATP pocket. The interval 320 to 340 (SVFGKENKKKQLIFKLPVIFA) is mediates membrane-binding. Phosphoserine occurs at positions 438, 468, 470, 484, and 493. The 89-residue stretch at 449–537 (DKSKYDEIFY…RRLVPPSKRR (89 aa)) folds into the EH domain. Positions 481-516 (LPNSVLGRIWKLSDVDRDGMLDDEEFALASHLIEAK) constitute an EF-hand domain. Residues Asp494, Asp496, Asp498, Met500, and Glu505 each contribute to the Ca(2+) site. Residues 521–543 (GLPTNLPRRLVPPSKRRQKGSAE) form a disordered region. The span at 534-543 (SKRRQKGSAE) shows a compositional bias: basic residues.

This sequence belongs to the TRAFAC class dynamin-like GTPase superfamily. Dynamin/Fzo/YdjA family. EHD subfamily. Homodimer and homooligomer. Interacts with EHD1. May also interact with EHD3 and EHD4. Interacts with MYOF. Interacts with EHBP1. Interacts with FER1L5 (via second C2 domain). Interacts with CAV1 in a cholesterol-dependent manner. Interacts (via EH domain) with PACSIN2 (via NPF motifs); this interaction probably stabilizes the caveolae.

The protein localises to the cell membrane. It localises to the membrane. It is found in the caveola. The protein resides in the endosome membrane. Its subcellular location is the cytoplasm. The protein localises to the cytosol. Its activity is regulated as follows. The very low intrinsic ATPase activity is increased upon interaction with liposomes. ATP- and membrane-binding protein that controls membrane reorganization/tubulation upon ATP hydrolysis. Plays a role in membrane trafficking between the plasma membrane and endosomes. Important for the internalization of GLUT4. Required for fusion of myoblasts to skeletal muscle myotubes. Required for normal translocation of FER1L5 to the plasma membrane. Regulates the equilibrium between cell surface-associated and cell surface-dissociated caveolae by constraining caveolae at the cell membrane. The protein is EH domain-containing protein 2 of Rattus norvegicus (Rat).